We begin with the raw amino-acid sequence, 218 residues long: Ubiquitin-conjugating enzyme E2-24 kDa (218 aa).

A UBC core domain is found at 3–148 (SSKRRIETDV…IKEYIDKYAT (146 aa)). Cys85 acts as the Glycyl thioester intermediate in catalysis. The segment at 154–218 (QMFGGDNDSD…DDDYDEVANQ (65 aa)) is disordered. Composition is skewed to acidic residues over residues 160–183 (NDSD…EDMD) and 192–218 (DSVD…VANQ).

Belongs to the ubiquitin-conjugating enzyme family.

The protein localises to the cytoplasm. It catalyses the reaction S-ubiquitinyl-[E1 ubiquitin-activating enzyme]-L-cysteine + [E2 ubiquitin-conjugating enzyme]-L-cysteine = [E1 ubiquitin-activating enzyme]-L-cysteine + S-ubiquitinyl-[E2 ubiquitin-conjugating enzyme]-L-cysteine.. Its pathway is protein modification; protein ubiquitination. Its function is as follows. Catalyzes the covalent attachment of ubiquitin to other proteins. Required for the adaptation to the presence of glucose in the growth medium; mediates the degradation of enzymes involved in gluconeogenesis when cells are shifted to glucose-containing medium. Required for proteasome-dependent catabolite degradation of fructose-1,6-bisphosphatase (FBP1). This chain is Ubiquitin-conjugating enzyme E2-24 kDa (UBC8), found in Saccharomyces cerevisiae (strain ATCC 204508 / S288c) (Baker's yeast).